Here is a 201-residue protein sequence, read N- to C-terminus: Potassium-transporting ATPase KdpC subunit (201 aa).

Residues leucine 12 to leucine 34 form a helical membrane-spanning segment. A disordered region spans residues arginine 69–threonine 102. Residues serine 81–proline 101 are compositionally biased toward polar residues.

The protein belongs to the KdpC family. In terms of assembly, the system is composed of three essential subunits: KdpA, KdpB and KdpC.

It is found in the cell inner membrane. Functionally, part of the high-affinity ATP-driven potassium transport (or Kdp) system, which catalyzes the hydrolysis of ATP coupled with the electrogenic transport of potassium into the cytoplasm. This subunit acts as a catalytic chaperone that increases the ATP-binding affinity of the ATP-hydrolyzing subunit KdpB by the formation of a transient KdpB/KdpC/ATP ternary complex. This chain is Potassium-transporting ATPase KdpC subunit, found in Rhodopseudomonas palustris (strain TIE-1).